The following is a 664-amino-acid chain: Macoilin (664 aa).

4 helical membrane passes run 28-48 (TFLYLKFLVVWALVLLADFVL), 75-95 (AFSVFFVCVAFTSNIICLLFI), 120-140 (VCLPTVSLWILFVYIEAAIRF), and 154-174 (FAAHCIGYPVVTLGFGFKSYV). Residues 253–265 (REKGKEKDKDAKK) are compositionally biased toward basic and acidic residues. The interval 253 to 274 (REKGKEKDKDAKKHNLGINNNN) is disordered. The residue at position 305 (serine 305) is a Phosphoserine. Polar residues predominate over residues 320–348 (KNYKNASGVVNSSPRSHSATNGSIPSSSS). The interval 320-367 (KNYKNASGVVNSSPRSHSATNGSIPSSSSKNEKKQKCTSKSPSAHKDL) is disordered. N-linked (GlcNAc...) asparagine glycosylation is present at asparagine 324. Phosphoserine is present on serine 332. N-linked (GlcNAc...) asparagine glycosylation is found at asparagine 340 and asparagine 452. A disordered region spans residues 630–664 (TSPLSPVSPHYSSKFVETSPSGLDPNASVYQPLKK). Serine 631 and serine 634 each carry phosphoserine. An N-linked (GlcNAc...) asparagine glycan is attached at asparagine 655.

Belongs to the macoilin family.

The protein resides in the rough endoplasmic reticulum membrane. It is found in the nucleus membrane. Functionally, plays a role in the regulation of neuronal activity. The sequence is that of Macoilin (MACO1) from Sus scrofa (Pig).